We begin with the raw amino-acid sequence, 50 residues long: Putative protein HokG (50 aa).

A helical membrane pass occupies residues 5–25 (YALVAIIVLCCTVLGFTLMVG).

It belongs to the Hok/Gef family.

It is found in the cell inner membrane. Toxic component of a type I toxin-antitoxin (TA) system. When overexpressed kills cells within minutes; causes collapse of the transmembrane potential and arrest of respiration. Its toxic effect is probably neutralized by an antisense antitoxin Sok RNA. The protein is Putative protein HokG (hokG) of Escherichia coli O157:H7.